Consider the following 286-residue polypeptide: Pantothenate synthetase (286 aa).

30-37 (MGNLHAGH) contributes to the ATP binding site. The active-site Proton donor is the histidine 37. Glutamine 61 serves as a coordination point for (R)-pantoate. Glutamine 61 lines the beta-alanine pocket. Residue 149 to 152 (GEKD) coordinates ATP. Position 155 (glutamine 155) interacts with (R)-pantoate. Residues valine 178 and 186–189 (MSSR) contribute to the ATP site.

Belongs to the pantothenate synthetase family. As to quaternary structure, homodimer.

The protein resides in the cytoplasm. The enzyme catalyses (R)-pantoate + beta-alanine + ATP = (R)-pantothenate + AMP + diphosphate + H(+). It participates in cofactor biosynthesis; (R)-pantothenate biosynthesis; (R)-pantothenate from (R)-pantoate and beta-alanine: step 1/1. Functionally, catalyzes the condensation of pantoate with beta-alanine in an ATP-dependent reaction via a pantoyl-adenylate intermediate. The sequence is that of Pantothenate synthetase from Thioalkalivibrio sulfidiphilus (strain HL-EbGR7).